The primary structure comprises 214 residues: Large ribosomal subunit protein uL3 (214 aa).

Positions 132–145 (SNRASHGNSVTTRA) are enriched in polar residues. A disordered region spans residues 132–155 (SNRASHGNSVTTRAPGSIGQAQDP). Q153 bears the N5-methylglutamine mark.

The protein belongs to the universal ribosomal protein uL3 family. In terms of assembly, part of the 50S ribosomal subunit. Forms a cluster with proteins L14 and L19. In terms of processing, methylated by PrmB.

Functionally, one of the primary rRNA binding proteins, it binds directly near the 3'-end of the 23S rRNA, where it nucleates assembly of the 50S subunit. This chain is Large ribosomal subunit protein uL3, found in Laribacter hongkongensis (strain HLHK9).